We begin with the raw amino-acid sequence, 426 residues long: Serine--tRNA ligase (426 aa).

Threonine 235–glutamate 237 is a binding site for L-serine. Arginine 266 to glutamate 268 contacts ATP. Glutamate 289 contributes to the L-serine binding site. Glutamate 353–serine 356 lines the ATP pocket. Serine 389 contacts L-serine.

This sequence belongs to the class-II aminoacyl-tRNA synthetase family. Type-1 seryl-tRNA synthetase subfamily. In terms of assembly, homodimer. The tRNA molecule binds across the dimer.

It is found in the cytoplasm. The enzyme catalyses tRNA(Ser) + L-serine + ATP = L-seryl-tRNA(Ser) + AMP + diphosphate + H(+). The catalysed reaction is tRNA(Sec) + L-serine + ATP = L-seryl-tRNA(Sec) + AMP + diphosphate + H(+). Its pathway is aminoacyl-tRNA biosynthesis; selenocysteinyl-tRNA(Sec) biosynthesis; L-seryl-tRNA(Sec) from L-serine and tRNA(Sec): step 1/1. Functionally, catalyzes the attachment of serine to tRNA(Ser). Is also able to aminoacylate tRNA(Sec) with serine, to form the misacylated tRNA L-seryl-tRNA(Sec), which will be further converted into selenocysteinyl-tRNA(Sec). In Nostoc punctiforme (strain ATCC 29133 / PCC 73102), this protein is Serine--tRNA ligase.